The following is a 178-amino-acid chain: Peptidyl-prolyl cis-trans isomerase H (178 aa).

A PPIase cyclophilin-type domain is found at 14-177 (FFDISIGDVP…LPVKITECGQ (164 aa)).

The protein belongs to the cyclophilin-type PPIase family. PPIase H subfamily.

It localises to the nucleus. The enzyme catalyses [protein]-peptidylproline (omega=180) = [protein]-peptidylproline (omega=0). Functionally, PPIases accelerate the folding of proteins. It catalyzes the cis-trans isomerization of proline imidic peptide bonds in oligopeptides. The polypeptide is Peptidyl-prolyl cis-trans isomerase H (cyp7) (Rhizopus delemar (strain RA 99-880 / ATCC MYA-4621 / FGSC 9543 / NRRL 43880) (Mucormycosis agent)).